The following is an 86-amino-acid chain: Small ribosomal subunit protein uS17 (86 aa).

It belongs to the universal ribosomal protein uS17 family. Part of the 30S ribosomal subunit.

One of the primary rRNA binding proteins, it binds specifically to the 5'-end of 16S ribosomal RNA. This chain is Small ribosomal subunit protein uS17, found in Bifidobacterium adolescentis (strain ATCC 15703 / DSM 20083 / NCTC 11814 / E194a).